The primary structure comprises 411 residues: tRNA (guanine(37)-N(1))-methyltransferase (411 aa).

S-adenosyl-L-methionine is bound by residues histidine 216, 254–255, 282–283, and asparagine 303; these read DL and DG. Residues 391-411 are disordered; sequence ERQASKQDDPKRRKVAAENAA.

Belongs to the class I-like SAM-binding methyltransferase superfamily. TRM5/TYW2 family. As to quaternary structure, monomer.

Its subcellular location is the mitochondrion matrix. The protein resides in the nucleus. The protein localises to the cytoplasm. It catalyses the reaction guanosine(37) in tRNA + S-adenosyl-L-methionine = N(1)-methylguanosine(37) in tRNA + S-adenosyl-L-homocysteine + H(+). Functionally, specifically methylates the N1 position of guanosine-37 in various cytoplasmic and mitochondrial tRNAs. Methylation is not dependent on the nature of the nucleoside 5' of the target nucleoside. This is the first step in the biosynthesis of wybutosine (yW), a modified base adjacent to the anticodon of tRNAs and required for accurate decoding. This is tRNA (guanine(37)-N(1))-methyltransferase from Phytophthora infestans (strain T30-4) (Potato late blight agent).